Reading from the N-terminus, the 100-residue chain is Thioredoxin (100 aa).

The region spanning 1–100 is the Thioredoxin domain; it reads MKHITNKAEL…PKNELKELLK (100 aa). Cys29 and Cys32 are joined by a disulfide.

This sequence belongs to the thioredoxin family.

Functionally, participates in various redox reactions through the reversible oxidation of its active center dithiol to a disulfide and catalyzes dithiol-disulfide exchange reactions. This chain is Thioredoxin (trxA), found in Mycoplasmoides gallisepticum (strain R(low / passage 15 / clone 2)) (Mycoplasma gallisepticum).